The primary structure comprises 135 residues: MSADYYEHLYCVFCYCVLGKVEARRCYDKKIRTVVRGGLRCAVCTACLEKGLYLERVLNAPQPVYQGSIEEPDPFIQKACIRCMYCGGILTRDEKDRHRYFEELYVIFRNQVLGRCYTCTRHGMCSAPYRANATG.

Zinc fingers lie at residues 11–47 and 83–119; these read CVFC…CTAC and CMYC…CYTC.

It belongs to the papillomaviridae E6 protein family. As to quaternary structure, forms homodimers. Interacts with ubiquitin-protein ligase UBE3A/E6-AP; this interaction stimulates UBE3A ubiquitin activity. Interacts with host BAK1.

Its subcellular location is the host cytoplasm. It localises to the host nucleus. Functionally, plays a major role in the induction and maintenance of cellular transformation. E6 associates with host UBE3A/E6-AP ubiquitin-protein ligase and modulates its activity. Protects host keratinocytes from apoptosis by mediating the degradation of host BAK1. May also inhibit host immune response. The chain is Protein E6 from Odocoileus virginianus papillomavirus 1 (DPV).